A 1382-amino-acid polypeptide reads, in one-letter code: Hepatocyte growth factor receptor (1382 aa).

A signal peptide spans 1-24; the sequence is MKASAVLAPGILVILFTLVQKSNC. At 25–933 the chain is on the extracellular side; it reads ECKEALVKSK…VIVQPDQNIT (909 aa). One can recognise a Sema domain in the interval 27 to 516; the sequence is KEALVKSKMN…TGKKITKIPL (490 aa). A glycan (N-linked (GlcNAc...) asparagine) is linked at Asn-45. 4 disulfides stabilise this stretch: Cys-95–Cys-101, Cys-98–Cys-160, Cys-133–Cys-141, and Cys-173–Cys-176. Asn-106 is a glycosylation site (N-linked (GlcNAc...) asparagine). 2 N-linked (GlcNAc...) asparagine glycosylation sites follow: Asn-203 and Asn-359. 2 disulfides stabilise this stretch: Cys-299/Cys-364 and Cys-386/Cys-398. N-linked (GlcNAc...) asparagine glycans are attached at residues Asn-400 and Asn-406. 4 disulfides stabilise this stretch: Cys-521–Cys-539, Cys-527–Cys-562, Cys-530–Cys-546, and Cys-542–Cys-552. IPT/TIG domains follow at residues 564 to 656, 658 to 740, and 743 to 837; these read PTIY…FSYV, PIIT…FSYQ, and PIIY…LIYV. Residue Thr-583 is glycosylated (O-linked (Man) threonine). N-linked (GlcNAc...) asparagine glycans are attached at residues Asn-608 and Asn-636. Residues Thr-677 and Thr-762 are each glycosylated (O-linked (Man) threonine). 3 N-linked (GlcNAc...) asparagine glycosylation sites follow: Asn-786, Asn-880, and Asn-931. Residues 934–956 form a helical membrane-spanning segment; the sequence is EFIVGILSISGILLTLLGLLLWW. Topologically, residues 957 to 1382 are cytoplasmic; sequence KKKKQIKDLG…QDNFDSEGNT (426 aa). Ser-967 carries the post-translational modification Phosphoserine. At Thr-978 the chain carries Phosphothreonine. A phosphoserine mark is found at Ser-991, Ser-998, and Ser-1001. The residue at position 1004 (Tyr-1004) is a Phosphotyrosine. The 268-residue stretch at 1079 to 1346 folds into the Protein kinase domain; sequence VHFNEVIGRG…RISAIFSTFI (268 aa). ATP contacts are provided by residues 1085-1093 and Lys-1111; that span reads IGRGHFGCV. Asp-1205 acts as the Proton acceptor in catalysis. Positions 1213–1382 are interaction with RANBP9; the sequence is LDENFTVKVA…QDNFDSEGNT (170 aa). At Tyr-1231 the chain carries Phosphotyrosine. 2 positions are modified to phosphotyrosine; by autocatalysis: Tyr-1235 and Tyr-1236. At Thr-1290 the chain carries Phosphothreonine. Residues 1321–1360 form an interaction with MUC20 region; the sequence is WHPKAELRPSFSELVSRISAIFSTFIGEHYVHVNATYVNI. Tyr-1350 and Tyr-1357 each carry phosphotyrosine; by autocatalysis. At Tyr-1366 the chain carries Phosphotyrosine.

It belongs to the protein kinase superfamily. Tyr protein kinase family. Heterodimer made of an alpha chain (50 kDa) and a beta chain (145 kDa) which are disulfide linked. Binds PLXNB1. Interacts when phosphorylated with downstream effectors including STAT3, PIK3R1, SRC, PCLG1, GRB2 and GAB1. Interacts with SPSB1, SPSB2 and SPSB4. Interacts with INPP5D/SHIP1. When phosphorylated at Tyr-1357, interacts with INPPL1/SHIP2. Interacts with RANBP9 and RANBP10, as well as SPSB1, SPSB2, SPSB3 and SPSB4. SPSB1 binding occurs in the presence and in the absence of HGF, however HGF treatment has a positive effect on this interaction. Interacts with MUC20; prevents interaction with GRB2 and suppresses hepatocyte growth factor-induced cell proliferation. Interacts with GRB10. Interacts with PTPN1 and PTPN2. Interacts with tensin TNS3. Interacts (when phosphorylated) with tensin TNS4 (via SH2 domain); the interaction increases MET protein stability by inhibiting MET endocytosis and subsequent lysosomal degradation. Post-translationally, autophosphorylated in response to ligand binding on Tyr-1235 and Tyr-1236 in the kinase domain leading to further phosphorylation of Tyr-1350 and Tyr-1357 in the C-terminal multifunctional docking site. Dephosphorylated by PTPRJ at Tyr-1350 and Tyr-1366. Dephosphorylated by PTPN1 and PTPN2. In terms of processing, ubiquitinated. Ubiquitination by CBL regulates the receptor stability and activity through proteasomal degradation. O-mannosylation of IPT/TIG domains by TMEM260 is required for protein maturation. O-mannosylated residues are composed of single mannose glycans that are not elongated or modified.

The protein resides in the membrane. The enzyme catalyses L-tyrosyl-[protein] + ATP = O-phospho-L-tyrosyl-[protein] + ADP + H(+). With respect to regulation, in its inactive state, the C-terminal tail interacts with the catalytic domain and inhibits the kinase activity. Upon ligand binding, the C-terminal tail is displaced and becomes phosphorylated, thus increasing the kinase activity. In terms of biological role, receptor tyrosine kinase that transduces signals from the extracellular matrix into the cytoplasm by binding to hepatocyte growth factor/HGF ligand. Regulates many physiological processes including proliferation, scattering, morphogenesis and survival. Ligand binding at the cell surface induces autophosphorylation of MET on its intracellular domain that provides docking sites for downstream signaling molecules. Following activation by ligand, interacts with the PI3-kinase subunit PIK3R1, PLCG1, SRC, GRB2, STAT3 or the adapter GAB1. Recruitment of these downstream effectors by MET leads to the activation of several signaling cascades including the RAS-ERK, PI3 kinase-AKT, or PLCgamma-PKC. The RAS-ERK activation is associated with the morphogenetic effects while PI3K/AKT coordinates prosurvival effects. During embryonic development, MET signaling plays a role in gastrulation, development and migration of muscles and neuronal precursors, angiogenesis and kidney formation. In adults, participates in wound healing as well as organ regeneration and tissue remodeling. Also promotes differentiation and proliferation of hematopoietic cells. The sequence is that of Hepatocyte growth factor receptor (MET) from Atelerix albiventris (Middle-African hedgehog).